Consider the following 322-residue polypeptide: DNA primase small subunit PriS (322 aa).

Catalysis depends on residues aspartate 86, aspartate 88, and aspartate 226.

Belongs to the eukaryotic-type primase small subunit family. As to quaternary structure, heterodimer of a small subunit (PriS) and a large subunit (PriL). Mg(2+) is required as a cofactor. It depends on Mn(2+) as a cofactor.

Functionally, catalytic subunit of DNA primase, an RNA polymerase that catalyzes the synthesis of short RNA molecules used as primers for DNA polymerase during DNA replication. The small subunit contains the primase catalytic core and has DNA synthesis activity on its own. Binding to the large subunit stabilizes and modulates the activity, increasing the rate of DNA synthesis while decreasing the length of the DNA fragments, and conferring RNA synthesis capability. The DNA polymerase activity may enable DNA primase to also catalyze primer extension after primer synthesis. May also play a role in DNA repair. The protein is DNA primase small subunit PriS of Thermoplasma acidophilum (strain ATCC 25905 / DSM 1728 / JCM 9062 / NBRC 15155 / AMRC-C165).